A 465-amino-acid polypeptide reads, in one-letter code: Neuraminidase (465 aa).

The Intravirion portion of the chain corresponds to 1 to 11; the sequence is MLPSTIQTLTL. A helical transmembrane segment spans residues 12 to 34; that stretch reads FLTSGGVLLSLYVSASLSYLLYS. The tract at residues 13–35 is involved in apical transport and lipid raft association; the sequence is LTSGGVLLSLYVSASLSYLLYSD. Over 35–465 the chain is Virion surface; the sequence is DILLKFSSKI…DTVTGVDMAL (431 aa). The hypervariable stalk region stretch occupies residues 38–85; the sequence is LKFSSKITAPTMTLDCANASNVQAVNRSATKEMTFLLPEPEWTYPRLS. Residues asparagine 55 and asparagine 63 are each glycosylated (N-linked (GlcNAc...) asparagine; by host). 8 disulfide bridges follow: cysteine 86–cysteine 419, cysteine 121–cysteine 126, cysteine 181–cysteine 228, cysteine 230–cysteine 235, cysteine 276–cysteine 290, cysteine 278–cysteine 288, cysteine 317–cysteine 336, and cysteine 423–cysteine 446. A head of neuraminidase region spans residues 88–465; sequence GSTFQKALLI…DTVTGVDMAL (378 aa). Arginine 115 provides a ligand contact to substrate. A glycan (N-linked (GlcNAc...) asparagine; by host) is linked at asparagine 143. The Proton donor/acceptor role is filled by aspartate 148. Arginine 149 is a substrate binding site. Residue 274–275 coordinates substrate; that stretch reads EE. The N-linked (GlcNAc...) asparagine; by host glycan is linked to asparagine 283. Residue arginine 291 participates in substrate binding. The Ca(2+) site is built by aspartate 292, threonine 296, aspartate 323, glycine 343, and glycine 345. Arginine 373 is a binding site for substrate. Tyrosine 408 acts as the Nucleophile in catalysis.

The protein belongs to the glycosyl hydrolase 34 family. In terms of assembly, homotetramer. Ca(2+) serves as cofactor. N-glycosylated.

The protein resides in the virion membrane. Its subcellular location is the host apical cell membrane. The catalysed reaction is Hydrolysis of alpha-(2-&gt;3)-, alpha-(2-&gt;6)-, alpha-(2-&gt;8)- glycosidic linkages of terminal sialic acid residues in oligosaccharides, glycoproteins, glycolipids, colominic acid and synthetic substrates.. Inhibited by the neuraminidase inhibitors zanamivir (Relenza) and oseltamivir (Tamiflu). These drugs interfere with the release of progeny virus from infected cells and are effective against all influenza strains. Resistance to neuraminidase inhibitors is quite rare. In terms of biological role, catalyzes the removal of terminal sialic acid residues from viral and cellular glycoconjugates. Cleaves off the terminal sialic acids on the glycosylated HA during virus budding to facilitate virus release. Additionally helps virus spread through the circulation by further removing sialic acids from the cell surface. These cleavages prevent self-aggregation and ensure the efficient spread of the progeny virus from cell to cell. Otherwise, infection would be limited to one round of replication. Described as a receptor-destroying enzyme because it cleaves a terminal sialic acid from the cellular receptors. May facilitate viral invasion of the upper airways by cleaving the sialic acid moieties on the mucin of the airway epithelial cells. Likely to plays a role in the budding process through its association with lipid rafts during intracellular transport. May additionally display a raft-association independent effect on budding. Plays a role in the determination of host range restriction on replication and virulence. Sialidase activity in late endosome/lysosome traffic seems to enhance virus replication. This is Neuraminidase from Influenza B virus (strain B/Beijing/1/1987).